Reading from the N-terminus, the 89-residue chain is Small ribosomal subunit protein uS15 (89 aa).

It belongs to the universal ribosomal protein uS15 family. As to quaternary structure, part of the 30S ribosomal subunit. Forms a bridge to the 50S subunit in the 70S ribosome, contacting the 23S rRNA.

One of the primary rRNA binding proteins, it binds directly to 16S rRNA where it helps nucleate assembly of the platform of the 30S subunit by binding and bridging several RNA helices of the 16S rRNA. In terms of biological role, forms an intersubunit bridge (bridge B4) with the 23S rRNA of the 50S subunit in the ribosome. This chain is Small ribosomal subunit protein uS15, found in Staphylococcus carnosus (strain TM300).